A 210-amino-acid polypeptide reads, in one-letter code: Thymidylate kinase (210 aa).

10 to 17 (GPEGAGKS) provides a ligand contact to ATP.

Belongs to the thymidylate kinase family.

It catalyses the reaction dTMP + ATP = dTDP + ADP. Functionally, phosphorylation of dTMP to form dTDP in both de novo and salvage pathways of dTTP synthesis. This is Thymidylate kinase from Pseudomonas savastanoi pv. phaseolicola (strain 1448A / Race 6) (Pseudomonas syringae pv. phaseolicola (strain 1448A / Race 6)).